We begin with the raw amino-acid sequence, 428 residues long: D-amino acid dehydrogenase (428 aa).

FAD is bound at residue 3-17 (VVILGSGVVGVASAY).

Belongs to the DadA oxidoreductase family. Requires FAD as cofactor.

The enzyme catalyses a D-alpha-amino acid + A + H2O = a 2-oxocarboxylate + AH2 + NH4(+). It participates in amino-acid degradation; D-alanine degradation; NH(3) and pyruvate from D-alanine: step 1/1. In terms of biological role, oxidative deamination of D-amino acids. The chain is D-amino acid dehydrogenase from Burkholderia cenocepacia (strain ATCC BAA-245 / DSM 16553 / LMG 16656 / NCTC 13227 / J2315 / CF5610) (Burkholderia cepacia (strain J2315)).